The primary structure comprises 785 residues: ATP-dependent 6-phosphofructokinase 1 (785 aa).

The N-terminal catalytic PFK domain 1 stretch occupies residues 1–389 (MATTHAPAEP…YHFAYKNTAT (389 aa)). ATP-binding positions include Gly-23, 86–87 (RS), and 116–119 (GDGS). Asp-117 contributes to the Mg(2+) binding site. Residues 162–164 (SID), Arg-199, 206–208 (MGR), Glu-263, Arg-291, and 297–300 (HTQR) each bind substrate. The active-site Proton acceptor is the Asp-164. The interval 390–403 (PDHPKLILPENKRM) is interdomain linker. The C-terminal regulatory PFK domain 2 stretch occupies residues 404-785 (RIAIIHVGAP…KTGWSCYENC (382 aa)). Residues Arg-480, 537–541 (TISNN), Arg-575, 582–584 (QGG), Glu-642, Arg-668, 674–677 (HFQQ), and Arg-749 each bind beta-D-fructose 2,6-bisphosphate.

It belongs to the phosphofructokinase type A (PFKA) family. ATP-dependent PFK group I subfamily. Eukaryotic two domain clade 'E' sub-subfamily. In terms of assembly, homotetramer. It depends on Mg(2+) as a cofactor.

The protein localises to the cytoplasm. It carries out the reaction beta-D-fructose 6-phosphate + ATP = beta-D-fructose 1,6-bisphosphate + ADP + H(+). It participates in carbohydrate degradation; glycolysis; D-glyceraldehyde 3-phosphate and glycerone phosphate from D-glucose: step 3/4. Its activity is regulated as follows. Allosterically activated by ADP, AMP, or fructose 2,6-bisphosphate, and allosterically inhibited by ATP or citrate. Its function is as follows. Catalyzes the phosphorylation of D-fructose 6-phosphate to fructose 1,6-bisphosphate by ATP, the first committing step of glycolysis. The protein is ATP-dependent 6-phosphofructokinase 1 (pfkA) of Aspergillus oryzae (strain ATCC 42149 / RIB 40) (Yellow koji mold).